The chain runs to 1766 residues: Putative ATP-dependent RNA helicase R366 (1766 aa).

The tract at residues 209-239 (KSSSNQNSNQSNQESNESNQEPNESNQEINQ) is disordered. Low complexity predominate over residues 210-239 (SSSNQNSNQSNQESNESNQEPNESNQEINQ). The 210-residue stretch at 656–865 (YHHYSNNRVL…RYYRRINDNR (210 aa)) folds into the Helicase ATP-binding domain. 669–676 (GATGVGKS) is a binding site for ATP. A DEAH box motif is present at residues 812-815 (DEAH). The Helicase C-terminal domain occupies 947 to 1116 (DIHKSIKAIN…TMVKLIKSYP (170 aa)).

It belongs to the DEAD box helicase family. DEAH subfamily.

It carries out the reaction ATP + H2O = ADP + phosphate + H(+). This chain is Putative ATP-dependent RNA helicase R366, found in Acanthamoeba polyphaga mimivirus (APMV).